Here is a 109-residue protein sequence, read N- to C-terminus: UPF0060 membrane protein mma_0129 (109 aa).

4 helical membrane passes run 7–27 (VALF…PYLW), 31–51 (GASI…VWLL), 63–83 (AAYG…VDGI), and 87–107 (NWDF…LFAP).

The protein belongs to the UPF0060 family.

It is found in the cell inner membrane. In Janthinobacterium sp. (strain Marseille) (Minibacterium massiliensis), this protein is UPF0060 membrane protein mma_0129.